A 367-amino-acid polypeptide reads, in one-letter code: Phosphoribosylaminoimidazole-succinocarboxamide synthase (367 aa).

This sequence belongs to the SAICAR synthetase family.

The catalysed reaction is 5-amino-1-(5-phospho-D-ribosyl)imidazole-4-carboxylate + L-aspartate + ATP = (2S)-2-[5-amino-1-(5-phospho-beta-D-ribosyl)imidazole-4-carboxamido]succinate + ADP + phosphate + 2 H(+). It participates in purine metabolism; IMP biosynthesis via de novo pathway; 5-amino-1-(5-phospho-D-ribosyl)imidazole-4-carboxamide from 5-amino-1-(5-phospho-D-ribosyl)imidazole-4-carboxylate: step 1/2. The protein is Phosphoribosylaminoimidazole-succinocarboxamide synthase of Vibrio parahaemolyticus serotype O3:K6 (strain RIMD 2210633).